Here is a 147-residue protein sequence, read N- to C-terminus: Secreted hemophore CSA2 (147 aa).

The first 20 residues, 1–20 (MKFSTILAIPFAIAFANAAA), serve as a signal peptide directing secretion. The CFEM domain maps to 34-145 (NPYTIYPPVP…SALDAAATAT (112 aa)). 4 disulfides stabilise this stretch: Cys-62–Cys-102, Cys-66–Cys-97, Cys-76–Cys-83, and Cys-85–Cys-118. Asp-80 contributes to the heme binding site.

It belongs to the RBT5 family. Homodimer. The possibility of a transient honotrimer assembly of the holo protein is not ruled out.

The protein resides in the secreted. Secreted heme-binding protein involved in the utilization of iron from human hemoglobin during hyphal growth. May also play a role in non-hemoglobin iron utilization. Heme transfer occurs between PGA7, RBT5 and CSA2 supporting a model in which the 3 CFEM proteins cooperate in a heme-acquisition system and form a cross-cell wall heme-transfer cascade. The ability to acquire iron from host tissues is a major virulence factor of pathogenic microorganisms. This is Secreted hemophore CSA2 (CSA2) from Candida albicans (strain SC5314 / ATCC MYA-2876) (Yeast).